A 353-amino-acid polypeptide reads, in one-letter code: Rhodopsin (353 aa).

Over 1–36 (MNGTEGPYFYVPMVNTSGIVRSPYEYPQYYLVNPAA) the chain is Extracellular. 2 N-linked (GlcNAc...) asparagine glycosylation sites follow: asparagine 2 and asparagine 15. A helical membrane pass occupies residues 37 to 61 (YARLGAYMFLLILVGFPINFLTLYV). Topologically, residues 62 to 73 (TIEHKKLRTPLN) are cytoplasmic. Residues 74-96 (YILLNLAVADLFMVFGGFTTTMY) traverse the membrane as a helical segment. Residues 97-110 (TSMHGYFVLGRLGC) are Extracellular-facing. A disulfide bridge links cysteine 110 with cysteine 187. Residues 111 to 133 (NIEGFFATLGGEIALWSLVVLAI) traverse the membrane as a helical segment. A 'Ionic lock' involved in activated form stabilization motif is present at residues 134–136 (ERW). Topologically, residues 134–152 (ERWVVVCKPISNFRFGENH) are cytoplasmic. The chain crosses the membrane as a helical span at residues 153–173 (AIMGLAFTWLMALACAAPPLV). Residues 174–202 (GWSRYIPEGMQCSCGIDYYTRAEGFNNES) lie on the Extracellular side of the membrane. N-linked (GlcNAc...) asparagine glycosylation occurs at asparagine 200. A helical transmembrane segment spans residues 203–224 (FVIYMFVCHFTVPLMVVFFCYG). The Cytoplasmic segment spans residues 225–252 (RLLCAVKEAAAAQQESETTQRAEREVTR). Residues 253–274 (MVIMMVVAFLVCWLPYASVAWW) form a helical membrane-spanning segment. Over 275-286 (IFTHQGSEFGPV) the chain is Extracellular. Residues 287 to 308 (FMTIPAFFAKSSSIYNPMIYIC) form a helical membrane-spanning segment. Lysine 296 bears the N6-(retinylidene)lysine mark. The Cytoplasmic segment spans residues 309–353 (LNKQFRHCMITTLCCGKNPFEEEEGASTASKTEASSVSSSSVSPA). S-palmitoyl cysteine attachment occurs at residues cysteine 322 and cysteine 323. The interval 331–353 (EEGASTASKTEASSVSSSSVSPA) is disordered. The span at 334-353 (ASTASKTEASSVSSSSVSPA) shows a compositional bias: low complexity.

Belongs to the G-protein coupled receptor 1 family. Opsin subfamily. Post-translationally, phosphorylated on some or all of the serine and threonine residues present in the C-terminal region. Contains one covalently linked retinal chromophore.

It localises to the membrane. Its subcellular location is the cell projection. The protein localises to the cilium. It is found in the photoreceptor outer segment. Its function is as follows. Photoreceptor required for image-forming vision at low light intensity. While most salt water fish species use retinal as chromophore, most freshwater fish use 3-dehydroretinal, or a mixture of retinal and 3-dehydroretinal. Light-induced isomerization of 11-cis to all-trans retinal triggers a conformational change that activates signaling via G-proteins. Subsequent receptor phosphorylation mediates displacement of the bound G-protein alpha subunit by arrestin and terminates signaling. This Sarpa salpa (Salema) protein is Rhodopsin (rho).